A 301-amino-acid chain; its full sequence is Possible hemolysin C (301 aa).

CBS domains follow at residues methionine 79 to leucine 141 and leucine 144 to glutamate 201.

This sequence belongs to the UPF0053 family. Hemolysin C subfamily.

The protein is Possible hemolysin C (tlyC) of Rickettsia bellii (strain RML369-C).